The following is a 370-amino-acid chain: MPSPLRTAPQPPLRAFHNPPALRRLYSSTSHSAATPATSPFAPRHLLSIADLTPTEFATLVRNASSHKRAIKSGSIPQSLHGALSGKTVAMMFSKRSTRTRISTEGAVVQMGGHPMFLGKDDIQLGVNESLYDTAVVVSSMVECIVARVGKHADVADLAKHSTKPVINALCDSYHPLQAIADFQTISEHFAASGKGKLEGLGLNGLKIAWVGDANNVLFDMAISARKMGVDVAVATPKGYEIPKEMLEIIEKAGEGVKSPGKLVQTNVPEEAVKGADVLVTDTWVSMGQEEEAAKRLRDFAGFQITSELAKRGGAKEGWRFMHCLPRHPEEVADEVFYGHRSLVFPEAENRLWAAISALEGFVVNKGKIE.

Residues 1-38 (MPSPLRTAPQPPLRAFHNPPALRRLYSSTSHSAATPAT) constitute a mitochondrion transit peptide. Carbamoyl phosphate is bound by residues 97–100 (STRT), Arg-148, His-175, and Gln-178. The L-ornithine site is built by Asn-216, Asp-282, Ser-286, and Met-287. The active-site Proton acceptor is Cys-324. Carbamoyl phosphate-binding positions include 324–325 (CL) and Arg-351.

The protein belongs to the aspartate/ornithine carbamoyltransferase superfamily. OTCase family. As to quaternary structure, homotrimer.

It is found in the mitochondrion matrix. It carries out the reaction carbamoyl phosphate + L-ornithine = L-citrulline + phosphate + H(+). It functions in the pathway amino-acid biosynthesis; L-arginine biosynthesis; L-arginine from L-ornithine and carbamoyl phosphate: step 1/3. The polypeptide is Ornithine carbamoyltransferase, mitochondrial (argB) (Aspergillus niger).